The chain runs to 58 residues: Ribosome biogenesis protein Nop10 (58 aa).

This sequence belongs to the NOP10 family.

Its function is as follows. Involved in ribosome biogenesis; more specifically in 18S rRNA pseudouridylation and in cleavage of pre-rRNA. In Thermococcus onnurineus (strain NA1), this protein is Ribosome biogenesis protein Nop10.